An 87-amino-acid chain; its full sequence is Large ribosomal subunit protein bL27 (87 aa).

The interval 1–21 (MAHKKAGGSSRNGRDSESKRL) is disordered.

Belongs to the bacterial ribosomal protein bL27 family.

The chain is Large ribosomal subunit protein bL27 from Burkholderia mallei (strain NCTC 10247).